A 319-amino-acid polypeptide reads, in one-letter code: Acetyl-coenzyme A carboxylase carboxyl transferase subunit alpha (319 aa).

The CoA carboxyltransferase C-terminal domain maps to E34–D295.

This sequence belongs to the AccA family. In terms of assembly, acetyl-CoA carboxylase is a heterohexamer composed of biotin carboxyl carrier protein (AccB), biotin carboxylase (AccC) and two subunits each of ACCase subunit alpha (AccA) and ACCase subunit beta (AccD).

The protein localises to the cytoplasm. The catalysed reaction is N(6)-carboxybiotinyl-L-lysyl-[protein] + acetyl-CoA = N(6)-biotinyl-L-lysyl-[protein] + malonyl-CoA. Its pathway is lipid metabolism; malonyl-CoA biosynthesis; malonyl-CoA from acetyl-CoA: step 1/1. In terms of biological role, component of the acetyl coenzyme A carboxylase (ACC) complex. First, biotin carboxylase catalyzes the carboxylation of biotin on its carrier protein (BCCP) and then the CO(2) group is transferred by the carboxyltransferase to acetyl-CoA to form malonyl-CoA. The sequence is that of Acetyl-coenzyme A carboxylase carboxyl transferase subunit alpha from Pseudoalteromonas translucida (strain TAC 125).